The following is a 321-amino-acid chain: MDYNNNRYGGGGGGSKFNLGHIVGDPFSLATIAIATAGWLIAFVSSIIANIDQEYPNYSWWALAYMFFVILGVTFAVAANAVYTYHVAMVGFLAAGLVFTTSSVNSLIYWSDKAKQAAAAGFILLSMVSIVWIFYFGSQPTASHRQTIDSFALHKDHAPSRASRHMTQSYRPETTHSAQHPQMYNSSQLAGFETSSPVTGYPGGAAGATKRESASAFPPPGQGGNFSNNQQPNPITSQNNPQNQHQQPQDLTSPSTTQQPTEYPYRAKAIYSYEANPDDANEISFNKHEILEVSDVSGRWWQAKKENGETGIAPSNYLILL.

At 1–28 (MDYNNNRYGGGGGGSKFNLGHIVGDPFS) the chain is on the cytoplasmic side. A helical membrane pass occupies residues 29 to 49 (LATIAIATAGWLIAFVSSIIA). The Extracellular portion of the chain corresponds to 50 to 58 (NIDQEYPNY). The N-linked (GlcNAc...) asparagine glycan is linked to Asn57. Residues 59-79 (SWWALAYMFFVILGVTFAVAA) form a helical membrane-spanning segment. Position 80 (Asn80) is a topological domain, cytoplasmic. Residues 81–101 (AVYTYHVAMVGFLAAGLVFTT) traverse the membrane as a helical segment. Residues 102-116 (SSVNSLIYWSDKAKQ) lie on the Extracellular side of the membrane. A helical transmembrane segment spans residues 117-137 (AAAAGFILLSMVSIVWIFYFG). Residues 138–321 (SQPTASHRQT…IAPSNYLILL (184 aa)) lie on the Cytoplasmic side of the membrane. Disordered stretches follow at residues 155–181 (KDHAPSRASRHMTQSYRPETTHSAQHP) and 194–261 (TSSP…QQPT). 2 stretches are compositionally biased toward polar residues: residues 165–181 (HMTQSYRPETTHSAQHP) and 225–237 (NFSNNQQPNPITS). Low complexity predominate over residues 238–249 (QNNPQNQHQQPQ). Polar residues predominate over residues 250–261 (DLTSPSTTQQPT). Positions 262-321 (EYPYRAKAIYSYEANPDDANEISFNKHEILEVSDVSGRWWQAKKENGETGIAPSNYLILL) constitute an SH3 domain.

The protein belongs to the SHO1 family. In terms of assembly, forms homooligomers.

The protein localises to the cell membrane. Functionally, plasma membrane osmosensor that activates the high osmolarity glycerol (HOG) MAPK signaling pathway in response to high osmolarity. The polypeptide is High osmolarity signaling protein SHO1A (SHO1A) (Hortaea werneckii).